The sequence spans 777 residues: Hepatocyte growth factor-regulated tyrosine kinase substrate (777 aa).

The VHS domain occupies 15–143; that stretch reads ATSQLLLETD…IMKVEGHVFP (129 aa). The segment at 160-220 adopts an FYVE-type zinc-finger fold; the sequence is WVDAEECHRC…VCEPCYEQLN (61 aa). Zn(2+) contacts are provided by cysteine 166, cysteine 169, cysteine 182, cysteine 185, cysteine 190, and cysteine 193. The residue at position 207 (lysine 207) is an N6-acetyllysine. Zn(2+) contacts are provided by cysteine 212 and cysteine 215. Tyrosine 216 bears the Phosphotyrosine mark. Residues 223–319 are disordered; the sequence is AEGKATSTTE…SPVNSSAPLA (97 aa). The interaction with SNX1 stretch occupies residues 225 to 543; the sequence is GKATSTTELP…QRLQEQEKER (319 aa). The UIM domain maps to 258 to 277; sequence QEEEELQLALALSQSEAEEK. Residues 290–311 are compositionally biased toward low complexity; that stretch reads PKAEPMPSASSAPPASSLYSSP. 3 positions are modified to phosphotyrosine: tyrosine 308, tyrosine 329, and tyrosine 334. The tract at residues 338–407 is disordered; sequence KQEEARKSPT…NGESEESHEQ (70 aa). Positions 445–543 are interaction with SNAP25 and TRAK2; it reads SINGMHPQLL…QRLQEQEKER (99 aa). The interval 454-572 is interaction with STAM; the sequence is LELLNQLDER…FPLPYAQLQA (119 aa). Positions 480–777 are interaction with NF2; the sequence is ARGALSALRE…GSEAQLISFD (298 aa). At lysine 551 the chain carries N6-succinyllysine. Residues 718–777 form a disordered region; that stretch reads LPSQDASLPPQQPYIAGQQPMYQQMAPSGGPPQQQPPVAQQPQAQGPPAQGSEAQLISFD. A compositionally biased stretch (low complexity) spans 753 to 768; sequence PPVAQQPQAQGPPAQG.

In terms of assembly, component of the ESCRT-0 complex composed of STAM or STAM2 and HGS. Part of a complex at least composed of HSG, STAM2 (or probably STAM) and EPS15. Interacts with STAM. Interacts with STAM2. Interacts with EPS15; the interaction is direct, calcium-dependent and inhibited by SNAP25. Identified in a complex with STAM and LITAF. Found in a complex with STAM and E3 ligase ITCH and DTX3L. Interacts with E3 ligase DTX3L; the interaction brings together STAM and HSG, promotes their recruitment to early endosomes and decreases STAM and HGS ubiquitination by ITCH. Interacts with NF2; the interaction is direct. Interacts with ubiquitin; the interaction is direct. Interacts with VPS37C. Interacts with SMAD1, SMAD2 and SMAD3. Interacts with TSG101; the interaction mediates the association with the ESCRT-I complex. Interacts with SNAP25; the interaction is direct and decreases with addition of increasing concentrations of free calcium. Interacts with SNX1; the interaction is direct. Component of a 550 kDa membrane complex at least composed of HGS and SNX1 but excluding EGFR. Interacts with TRAK1. Interacts with TRAK2. Component of the CART complex, at least composed of ACTN4, HGS/HRS, MYO5B and TRIM3. Interacts (via UIM domain) with UBQLN1 (via ubiquitin-like domain). Interacts with ARRDC3. Identified in a complex containing at least ARRDC4, AVPR2 and HGS. Interacts with LAPTM4B; promotes HGS ubiquitination. Post-translationally, phosphorylated on Tyr-334. A minor site of phosphorylation on Tyr-329 is detected. Phosphorylation occurs in response to EGF, IL-2, GM-CSF and HGF. Ubiquitinated. Ubiquitinated by ITCH. Ubiquitous expression in adult and fetal tissues with higher expression in testis and peripheral blood leukocytes.

It is found in the cytoplasm. It localises to the early endosome membrane. Its subcellular location is the endosome. The protein localises to the multivesicular body membrane. In terms of biological role, involved in intracellular signal transduction mediated by cytokines and growth factors. When associated with STAM, it suppresses DNA signaling upon stimulation by IL-2 and GM-CSF. Could be a direct effector of PI3-kinase in vesicular pathway via early endosomes and may regulate trafficking to early and late endosomes by recruiting clathrin. May concentrate ubiquitinated receptors within clathrin-coated regions. Involved in down-regulation of receptor tyrosine kinase via multivesicular body (MVBs) when complexed with STAM (ESCRT-0 complex). The ESCRT-0 complex binds ubiquitin and acts as a sorting machinery that recognizes ubiquitinated receptors and transfers them to further sequential lysosomal sorting/trafficking processes. May contribute to the efficient recruitment of SMADs to the activin receptor complex. Involved in receptor recycling via its association with the CART complex, a multiprotein complex required for efficient transferrin receptor recycling but not for EGFR degradation. The polypeptide is Hepatocyte growth factor-regulated tyrosine kinase substrate (HGS) (Homo sapiens (Human)).